Consider the following 269-residue polypeptide: Probable 3-deoxy-manno-octulosonic acid transferase (269 aa).

It is found in the cytoplasm. The catalysed reaction is an alpha-Kdo-(2-&gt;4)-alpha-Kdo-(2-&gt;6)-lipid IVA + CMP-3-deoxy-beta-D-manno-octulosonate = an alpha-Kdo-(2-&gt;4)-alpha-Kdo-(2-&gt;4)-alpha-Kdo-(2-&gt;6)-lipid IVA + CMP + H(+). It participates in bacterial outer membrane biogenesis; LPS core biosynthesis. Involved in the biosynthesis of the core oligosaccharide region of lipopolysaccharide (LPS). Required for the addition of 3-deoxy-D-manno-oct-2-ulosonic acid III (KdoIII) to the KdoII residue of the inner lipopolysaccharide core. This Salmonella typhimurium (strain LT2 / SGSC1412 / ATCC 700720) protein is Probable 3-deoxy-manno-octulosonic acid transferase.